A 429-amino-acid chain; its full sequence is Adenylosuccinate synthetase (429 aa).

GTP-binding positions include 12-18 (GDEGKGK) and 40-42 (GHT). Residue Asp13 is the Proton acceptor of the active site. Mg(2+)-binding residues include Asp13 and Gly40. IMP is bound by residues 13–16 (DEGK), 38–41 (NAGH), Thr130, Arg144, Gln225, Thr240, and Arg304. His41 (proton donor) is an active-site residue. 300–306 (ATTGRPR) is a binding site for substrate. GTP is bound by residues Arg306, 332 to 334 (KLD), and 414 to 416 (SVG).

Belongs to the adenylosuccinate synthetase family. In terms of assembly, homodimer. The cofactor is Mg(2+).

The protein localises to the cytoplasm. The catalysed reaction is IMP + L-aspartate + GTP = N(6)-(1,2-dicarboxyethyl)-AMP + GDP + phosphate + 2 H(+). The protein operates within purine metabolism; AMP biosynthesis via de novo pathway; AMP from IMP: step 1/2. Plays an important role in the de novo pathway of purine nucleotide biosynthesis. Catalyzes the first committed step in the biosynthesis of AMP from IMP. The protein is Adenylosuccinate synthetase of Syntrophobacter fumaroxidans (strain DSM 10017 / MPOB).